Consider the following 65-residue polypeptide: Probable tautomerase RSp1151 (65 aa).

Catalysis depends on proline 2, which acts as the Proton acceptor; via imino nitrogen.

Belongs to the 4-oxalocrotonate tautomerase family.

The sequence is that of Probable tautomerase RSp1151 from Ralstonia nicotianae (strain ATCC BAA-1114 / GMI1000) (Ralstonia solanacearum).